Consider the following 312-residue polypeptide: MMKNPLAVSIPGLTLKNPIIPASGCFGFGEEYANYYDLDQLGSIMIKATTPQARYGNPTPRVAETPSGMLNAIGLQNPGLEVVMQEKLPKLEKYPNLPIIANVAGACEEDYVAVCAKIGQAPNVKAIELNISCPNVKHGGIAFGTDPEVAFQLTQAVKKVASVPIYVKLSPNVTDIVPIAQAIEAGGADGFSMINTLLGMRIDLKTRKPILANQTGGLSGPAIKPVAIRLIRQVASVSQLPIIGMGGVQTVDDVLEMFMAGASAVGVGTANFTDPYICPKLIDGLPKRMEELGIESLEQLIKEVREGQQNAR.

Residues Ser-23 and 47 to 48 (KA) each bind FMN. Residues Lys-47 and 71 to 75 (NAIGL) each bind substrate. FMN-binding residues include Asn-102 and Asn-130. Asn-130 contacts substrate. The Nucleophile role is filled by Cys-133. 2 residues coordinate FMN: Lys-168 and Ile-194. Substrate is bound at residue 195-196 (NT). FMN contacts are provided by residues Gly-220, 246–247 (GG), and 268–269 (GT).

Belongs to the dihydroorotate dehydrogenase family. Type 1 subfamily. Heterotetramer of 2 PyrK and 2 PyrD type B subunits. It depends on FMN as a cofactor.

Its subcellular location is the cytoplasm. The enzyme catalyses (S)-dihydroorotate + NAD(+) = orotate + NADH + H(+). It functions in the pathway pyrimidine metabolism; UMP biosynthesis via de novo pathway; orotate from (S)-dihydroorotate (NAD(+) route): step 1/1. Catalyzes the conversion of dihydroorotate to orotate with NAD(+) as electron acceptor. The protein is Dihydroorotate dehydrogenase B (NAD(+)), catalytic subunit (pyrDB) of Enterococcus faecalis (strain ATCC 700802 / V583).